The following is a 505-amino-acid chain: Putative heat shock protein HSP 90-beta 4 (505 aa).

Residues Asn-22, Lys-83, and Phe-109 each contribute to the ATP site. Residues 197–248 (EKEISDDEEEKGEKEEEDKDDKEKPKTEDVGSDEEDDTDKNNKKKTKKIKEK) form a disordered region. Acidic residues predominate over residues 200–216 (ISDDEEEKGEKEEEDKD).

It belongs to the heat shock protein 90 family. As to quaternary structure, homodimer.

The protein resides in the cytoplasm. In terms of biological role, putative molecular chaperone that may promote the maturation, structural maintenance and proper regulation of specific target proteins. The chain is Putative heat shock protein HSP 90-beta 4 (HSP90AB4P) from Homo sapiens (Human).